We begin with the raw amino-acid sequence, 437 residues long: Transcription factor AP-2-alpha (437 aa).

Residue K10 forms a Glycyl lysine isopeptide (Lys-Gly) (interchain with G-Cter in SUMO); alternate linkage. Residue K10 forms a Glycyl lysine isopeptide (Lys-Gly) (interchain with G-Cter in SUMO2); alternate linkage. Residues 14–107 (CEDRHDGASN…GQRQSQESGL (94 aa)) form a disordered region. Residues 57-62 (YFPPPY) carry the PPxY motif motif. 2 stretches are compositionally biased toward low complexity: residues 65 to 74 (IYPQSQDPYS) and 88 to 101 (QPQPQHPGWPGQRQ). Residues K177 and K184 each participate in a glycyl lysine isopeptide (Lys-Gly) (interchain with G-Cter in SUMO2) cross-link. Residue S239 is modified to Phosphoserine; by PKA. Residues 280–410 (RRKAANVTLL…YLTEALKAMD (131 aa)) are H-S-H (helix-span-helix), dimerization. Residues 414 to 427 (LSNNPNSHTDNNAK) are compositionally biased toward polar residues. Residues 414–437 (LSNNPNSHTDNNAKSSDKEEKHRK) are disordered. Positions 428–437 (SSDKEEKHRK) are enriched in basic and acidic residues.

The protein belongs to the AP-2 family. In terms of assembly, binds DNA as a dimer. Can form homodimers or heterodimers with other AP-2 family members. Interacts with WWOX. Interacts with CITED4. Interacts with UBE2I. Interacts with RALBP1 in a complex also containing EPN1 and NUMB during interphase and mitosis. Interacts with KCTD1; this interaction represses transcription activation. Interacts (via C-terminus) with CITED2 (via C-terminus); the interaction stimulates TFAP2A-transcriptional activation. Interacts (via N-terminus) with EP300 (via N-terminus); the interaction requires CITED2. Interacts with KCTD15; this interaction inhibits TFAP2A transcriptional activation. Post-translationally, sumoylated on Lys-10; which inhibits transcriptional activity.

The protein localises to the nucleus. Its function is as follows. Sequence-specific DNA-binding protein that interacts with inducible viral and cellular enhancer elements to regulate transcription of selected genes. AP-2 factors bind to the consensus sequence 5'-GCCNNNGGC-3' and activate genes involved in a large spectrum of important biological functions including proper eye, face, body wall, limb and neural tube development. They also suppress a number of genes including MCAM/MUC18, C/EBP alpha and MYC. AP-2-alpha is the only AP-2 protein required for early morphogenesis of the lens vesicle. Together with the CITED2 coactivator, stimulates the PITX2 P1 promoter transcription activation. Associates with chromatin to the PITX2 P1 promoter region. This chain is Transcription factor AP-2-alpha (TFAP2A), found in Bos taurus (Bovine).